The chain runs to 74 residues: UPF0270 protein NT01EI_3666 (74 aa).

It belongs to the UPF0270 family.

This is UPF0270 protein NT01EI_3666 from Edwardsiella ictaluri (strain 93-146).